A 212-amino-acid polypeptide reads, in one-letter code: ATP-dependent dethiobiotin synthetase BioD (212 aa).

13–18 (GIGKTV) serves as a coordination point for ATP. Thr17 contacts Mg(2+). Lys33 is a catalytic residue. Ser37 is a binding site for substrate. Residue Glu100 coordinates Mg(2+). Residues 100–103 (EGAG) and 184–186 (PRL) contribute to the ATP site.

The protein belongs to the dethiobiotin synthetase family. In terms of assembly, homodimer. The cofactor is Mg(2+).

Its subcellular location is the cytoplasm. The enzyme catalyses (7R,8S)-7,8-diammoniononanoate + CO2 + ATP = (4R,5S)-dethiobiotin + ADP + phosphate + 3 H(+). Its pathway is cofactor biosynthesis; biotin biosynthesis; biotin from 7,8-diaminononanoate: step 1/2. Catalyzes a mechanistically unusual reaction, the ATP-dependent insertion of CO2 between the N7 and N8 nitrogen atoms of 7,8-diaminopelargonic acid (DAPA, also called 7,8-diammoniononanoate) to form a ureido ring. The protein is ATP-dependent dethiobiotin synthetase BioD of Brucella anthropi (strain ATCC 49188 / DSM 6882 / CCUG 24695 / JCM 21032 / LMG 3331 / NBRC 15819 / NCTC 12168 / Alc 37) (Ochrobactrum anthropi).